Here is a 119-residue protein sequence, read N- to C-terminus: MARSMKLACVVLAMCMLVAPMAEAAFSCATVMTDLRPCLTYLEAANNASPSPPCCAGVKNLQAAAPTVADRQAACNCLKSTAGAISNLNANNAAALPGKCGVNIPYKISASTNCNTIRF.

An N-terminal signal peptide occupies residues 1–24 (MARSMKLACVVLAMCMLVAPMAEA). 4 disulfides stabilise this stretch: cysteine 28/cysteine 77, cysteine 38/cysteine 54, cysteine 55/cysteine 100, and cysteine 75/cysteine 114.

It belongs to the plant LTP family. Expressed in roots, stem, leaves and tendrils of the mature plant.

Its function is as follows. Plant non-specific lipid-transfer proteins transfer phospholipids as well as galactolipids across membranes. May play a role in wax or cutin deposition in the cell walls of expanding epidermal cells and certain secretory tissues. The protein is Non-specific lipid-transfer protein 3 of Pisum sativum (Garden pea).